Here is a 64-residue protein sequence, read N- to C-terminus: Large ribosomal subunit protein bL35 (64 aa).

Residues 1–55 are disordered; that stretch reads MPKMKTNKSVSARFKLTASGQLKRTRPGKRHKLSKKSSQEKRNLSKQPLVDKGQV. Residues 23-35 show a composition bias toward basic residues; that stretch reads KRTRPGKRHKLSK.

Belongs to the bacterial ribosomal protein bL35 family.

In Chlamydia pneumoniae (Chlamydophila pneumoniae), this protein is Large ribosomal subunit protein bL35.